The sequence spans 357 residues: MEVVSQIDQENQAIIWKQIYGFSESLLLKCAVQCEIAETIHNHGTPMSILELAAKLPIDQPVNIDRLYRVMRYLVHQKLFNKEVISTLNGGTVQVTEKYWLAPPAKYLIRGSQQSMVPSVLGIIDEDMFAPWHILKDSLTGECNIFETALGKSISVYMSENPEMNQISNGAMAFDSGLVTSHLVNECKSVFGDEIKTLVDVGGGTGTALRAISKAFPNIKCTLFDLPHVIADSPEIPTITKVSGDMFKSIPSADAIFMKNILHDWNDDECIQILKRCKDVVSAGGKLIMVEMVLDEDSFHPYSKLRLTSDIDMMVNNGGKERTEKEWEKLFDAAGFASCKFTQMSVGFAAQSIIEVY.

Asp-225 lines the S-adenosyl-L-methionine pocket. His-263 functions as the Proton acceptor in the catalytic mechanism.

It belongs to the class I-like SAM-binding methyltransferase superfamily. Cation-independent O-methyltransferase family. As to expression, expressed instems, leaves, roots and seedlings.

Its function is as follows. Involved in the biosynthesis of benzylisoquinoline alkaloids. Catalyzes specifically the methylation of norreticuline at position seven to produce norlaudanine. No activity with norcoclaurine, reticuline, norlaudanosoline, norisoorientaline, scoulerine, salutaridinol, oripavine, salsolinol, codeine or morphine. Involved in papaverine biosynthesis. This is Norreticuline-7-O-methyltransferase from Papaver somniferum (Opium poppy).